Here is a 397-residue protein sequence, read N- to C-terminus: Acetate kinase (397 aa).

Residue Asn8 participates in Mg(2+) binding. Lys15 contributes to the ATP binding site. A substrate-binding site is contributed by Arg90. Catalysis depends on Asp147, which acts as the Proton donor/acceptor. Residues 207–211, 283–285, and 330–334 contribute to the ATP site; these read HLGAG, DMR, and GVGEN. Glu383 is a Mg(2+) binding site.

The protein belongs to the acetokinase family. In terms of assembly, homodimer. Requires Mg(2+) as cofactor. The cofactor is Mn(2+).

It localises to the cytoplasm. It carries out the reaction acetate + ATP = acetyl phosphate + ADP. It participates in metabolic intermediate biosynthesis; acetyl-CoA biosynthesis; acetyl-CoA from acetate: step 1/2. Functionally, catalyzes the formation of acetyl phosphate from acetate and ATP. Can also catalyze the reverse reaction. The protein is Acetate kinase of Fructilactobacillus sanfranciscensis (Lactobacillus sanfranciscensis).